A 723-amino-acid chain; its full sequence is Methionine--tRNA ligase (723 aa).

The short motif at 12–22 (PYANGDIHLGH) is the 'HIGH' region element. Zn(2+)-binding residues include Cys143, Cys146, Cys156, and Cys159. A 'KMSKS' region motif is present at residues 345–349 (KMSKS). Lys348 serves as a coordination point for ATP. A disordered region spans residues 568-604 (PAAATAPAKDAKPAKEAGSQQRHAEKQQHAAGVSETA). The 112-residue stretch at 612 to 723 (DFTKVDLRIA…EGAQAGMRVK (112 aa)) folds into the tRNA-binding domain.

This sequence belongs to the class-I aminoacyl-tRNA synthetase family. MetG type 1 subfamily. In terms of assembly, homodimer. Requires Zn(2+) as cofactor.

Its subcellular location is the cytoplasm. The catalysed reaction is tRNA(Met) + L-methionine + ATP = L-methionyl-tRNA(Met) + AMP + diphosphate. Is required not only for elongation of protein synthesis but also for the initiation of all mRNA translation through initiator tRNA(fMet) aminoacylation. In Azoarcus sp. (strain BH72), this protein is Methionine--tRNA ligase.